The following is a 389-amino-acid chain: Tyrosinase-like protein phomQ1 (389 aa).

Residues 53–73 (TIIVVSVITFAAIIGCWVFLS) traverse the membrane as a helical segment. Cu cation-binding residues include His141 and His150. Residue Asn220 is glycosylated (N-linked (GlcNAc...) asparagine). 2 residues coordinate Cu cation: His290 and His316.

Belongs to the tyrosinase family. Cu(2+) is required as a cofactor.

Its subcellular location is the membrane. It participates in mycotoxin biosynthesis. Functionally, tyrosinase-like protein; part of the gene cluster that mediates the biosynthesis of the phomopsins, a group of hexapeptide mycotoxins which infects lupins and causes lupinosis disease in livestock. Within the pathway, phomQ1 functions as a halogenase, converting. The pathway starts with the processing of the precursor phomA by several endopeptidases including kexin proteases as well as the cluster-specific S41 family peptidase phomP1 and the oligopeptidase phomG to produce 10 identical copies of the hexapeptide Tyr-Val-Ile-Pro-Ile-Asp. After being excised from the precursor peptide, the core peptides are cyclized and modified post-translationally by enzymes encoded within the gene cluster. The timing and order of proteolysis of the phomA precursor and PTMs are still unknown. Two tyrosinase-like enzymes, phomQ1 and phomQ2, catalyze the chlorination and hydroxylation of Tyr, respectively. PhomYb, is proposed to be involved in the construction of the macrocyclic structure. The other 4 ustYa family proteins may be involved in PTMs that generate the unique structure of phomopsin A. PhomYa is required for the hydroxylation of C-beta of Tyr. PhomYc, phomYd, and phomYe are responsible for the biosynthesis of 2,3-dehydroisoleucine (dIle), 2,3-dehydroaspartic acid (dAsp), and 3,4-dehydroproline (dPro), respectively. While dIle formation by phomYc is indispensable for the installation of dAsp by phomYd, the order of the other PTMs have not been elucidated yet. Most of the biosynthetic enzymes likely have broad substrate specificity, and thus, there might be a metabolic grid from a precursor to phomopsin A. The enzyme(s) responsible for the biosynthesis of 3,4-dehydrovaline (dVal) have also not been identified yet. Finally, phomM acts as an S-adenosylmethionine-dependent alpha-N-methyltransferase that catalyzes two successive N-methylation reactions, converting N-desmethyl-phomopsin A to phomopsin A and phomopsin A further to an N,N-dimethylated congener called phomopsin E. This chain is Tyrosinase-like protein phomQ1, found in Diaporthe leptostromiformis (Lupinosis disease fungus).